The following is a 169-amino-acid chain: Peptide deformylase (169 aa).

Fe cation contacts are provided by cysteine 91 and histidine 133. Glutamate 134 is a catalytic residue. Histidine 137 contributes to the Fe cation binding site.

The protein belongs to the polypeptide deformylase family. Fe(2+) serves as cofactor.

The enzyme catalyses N-terminal N-formyl-L-methionyl-[peptide] + H2O = N-terminal L-methionyl-[peptide] + formate. Functionally, removes the formyl group from the N-terminal Met of newly synthesized proteins. Requires at least a dipeptide for an efficient rate of reaction. N-terminal L-methionine is a prerequisite for activity but the enzyme has broad specificity at other positions. In Citrobacter koseri (strain ATCC BAA-895 / CDC 4225-83 / SGSC4696), this protein is Peptide deformylase.